The primary structure comprises 286 residues: NAD kinase (286 aa).

The active-site Proton acceptor is D74. NAD(+) is bound by residues 74 to 75 (DG), 148 to 149 (ND), D178, A186, 189 to 194 (TAYNLS), and Q244.

The protein belongs to the NAD kinase family. A divalent metal cation is required as a cofactor.

Its subcellular location is the cytoplasm. It carries out the reaction NAD(+) + ATP = ADP + NADP(+) + H(+). In terms of biological role, involved in the regulation of the intracellular balance of NAD and NADP, and is a key enzyme in the biosynthesis of NADP. Catalyzes specifically the phosphorylation on 2'-hydroxyl of the adenosine moiety of NAD to yield NADP. The chain is NAD kinase from Campylobacter jejuni subsp. jejuni serotype O:23/36 (strain 81-176).